A 508-amino-acid polypeptide reads, in one-letter code: Pyruvate kinase 2 (508 aa).

Residue Arg50 participates in substrate binding. Positions 52, 54, 85, and 86 each coordinate K(+). Asn52–His55 is a binding site for ATP. ATP contacts are provided by Arg92 and Lys178. Mg(2+) is bound at residue Glu243. Substrate is bound by residues Gly266, Asp267, and Thr299. Position 267 (Asp267) interacts with Mg(2+).

Belongs to the pyruvate kinase family. In terms of assembly, homotetramer. Requires Mg(2+) as cofactor. K(+) serves as cofactor.

The enzyme catalyses pyruvate + ATP = phosphoenolpyruvate + ADP + H(+). It functions in the pathway carbohydrate degradation; glycolysis; pyruvate from D-glyceraldehyde 3-phosphate: step 5/5. In Candida glabrata (strain ATCC 2001 / BCRC 20586 / JCM 3761 / NBRC 0622 / NRRL Y-65 / CBS 138) (Yeast), this protein is Pyruvate kinase 2 (PYK2).